We begin with the raw amino-acid sequence, 128 residues long: uncharacterized protein (128 aa).

This is an uncharacterized protein from Borreliella burgdorferi (strain ATCC 35210 / DSM 4680 / CIP 102532 / B31) (Borrelia burgdorferi).